Here is a 292-residue protein sequence, read N- to C-terminus: N-acetylneuraminate lyase (292 aa).

Serine 47 and threonine 48 together coordinate aceneuramate. Tyrosine 136 acts as the Proton donor in catalysis. Lysine 164 serves as the catalytic Schiff-base intermediate with substrate. The aceneuramate site is built by threonine 166, glycine 188, aspartate 190, glutamate 191, and serine 207.

Belongs to the DapA family. NanA subfamily. In terms of assembly, homotetramer.

Its subcellular location is the cytoplasm. It carries out the reaction aceneuramate = aldehydo-N-acetyl-D-mannosamine + pyruvate. Its pathway is amino-sugar metabolism; N-acetylneuraminate degradation; D-fructose 6-phosphate from N-acetylneuraminate: step 1/5. In terms of biological role, catalyzes the reversible aldol cleavage of N-acetylneuraminic acid (sialic acid; Neu5Ac) to form pyruvate and N-acetylmannosamine (ManNAc) via a Schiff base intermediate. The sequence is that of N-acetylneuraminate lyase from Histophilus somni (strain 129Pt) (Haemophilus somnus).